The chain runs to 99 residues: Aspartyl/glutamyl-tRNA(Asn/Gln) amidotransferase subunit C (99 aa).

The protein belongs to the GatC family. Heterotrimer of A, B and C subunits.

It catalyses the reaction L-glutamyl-tRNA(Gln) + L-glutamine + ATP + H2O = L-glutaminyl-tRNA(Gln) + L-glutamate + ADP + phosphate + H(+). The enzyme catalyses L-aspartyl-tRNA(Asn) + L-glutamine + ATP + H2O = L-asparaginyl-tRNA(Asn) + L-glutamate + ADP + phosphate + 2 H(+). Its function is as follows. Allows the formation of correctly charged Asn-tRNA(Asn) or Gln-tRNA(Gln) through the transamidation of misacylated Asp-tRNA(Asn) or Glu-tRNA(Gln) in organisms which lack either or both of asparaginyl-tRNA or glutaminyl-tRNA synthetases. The reaction takes place in the presence of glutamine and ATP through an activated phospho-Asp-tRNA(Asn) or phospho-Glu-tRNA(Gln). This Paraburkholderia phytofirmans (strain DSM 17436 / LMG 22146 / PsJN) (Burkholderia phytofirmans) protein is Aspartyl/glutamyl-tRNA(Asn/Gln) amidotransferase subunit C.